Here is a 1594-residue protein sequence, read N- to C-terminus: RB1-inducible coiled-coil protein 1 (1594 aa).

Phosphoserine is present on residues Ser222, Ser229, and Ser237. Thr238 carries the phosphothreonine modification. Phosphoserine is present on residues Ser243, Ser253, Ser257, Ser261, and Ser266. A Nuclear localization signal motif is present at residues 566-569 (KPRK). Phosphoserine is present on residues Ser624, Ser647, Ser650, Ser652, Ser653, Ser734, Ser1091, Ser1222, Ser1370, and Ser1484. The disordered stretch occupies residues 638–673 (EQKASVSQTSPQSASSPRMESTAGITTTTSPRTPPP). Positions 641–654 (ASVSQTSPQSASSP) are enriched in low complexity. The short motif at 731 to 737 (DFMSAVN) is the FFAT element. 2 coiled-coil regions span residues 859 to 1397 (LKEK…SSSF) and 1438 to 1485 (METS…SQSM).

Belongs to the ATG17 family. In terms of assembly, part of a complex consisting of ATG13/KIAA0652, ULK1 and RB1CC1. This complex associates with ATG101. Interacts with PTK2/FAK1 and PTK2B/PYK2. Interacts with GABARAP and GABARAPL1. Interacts with ATG16L1; the interaction is required for ULK1 complex-dependent autophagy. Interacts with RNF111, SKI and SMAD7. Interacts with COP1 in the cytoplasm of proliferating cells in response to UV stimulation. Interacts with TP53. Interacts with C9orf72. Interacts with WDR45B. Interacts with ATG13; this interaction is increased in the absence of TMEM39A. Interacts with WIPI2. Interacts with TAX1BP1. Interacts (via phosphorylated FFAT motif) with MOSPD2, VAPA and VAPB. In terms of processing, phosphorylation at Ser-734 of the FFAT motif activates interaction with MOSPD2, VAPA and VAPB. As to expression, expression levels correlated closely with those of RB1 in cancer cell lines as well as in various normal human tissues. Abundantly expressed in human musculoskeletal and cultured osteosarcoma cells.

The protein resides in the nucleus. It is found in the cytoplasm. Its subcellular location is the cytosol. It localises to the preautophagosomal structure. The protein localises to the lysosome. Its function is as follows. Involved in autophagy. Regulates early events but also late events of autophagosome formation through direct interaction with Atg16L1. Required for the formation of the autophagosome-like double-membrane structure that surrounds the Salmonella-containing vacuole (SCV) during S.typhimurium infection and subsequent xenophagy. Involved in repair of DNA damage caused by ionizing radiation, which subsequently improves cell survival by decreasing apoptosis. Inhibits PTK2/FAK1 and PTK2B/PYK2 kinase activity, affecting their downstream signaling pathways. Plays a role as a modulator of TGF-beta-signaling by restricting substrate specificity of RNF111. Functions as a DNA-binding transcription factor. Is a potent regulator of the RB1 pathway through induction of RB1 expression. Plays a crucial role in muscular differentiation. Plays an indispensable role in fetal hematopoiesis and in the regulation of neuronal homeostasis. The chain is RB1-inducible coiled-coil protein 1 from Homo sapiens (Human).